The primary structure comprises 750 residues: Photosystem I P700 chlorophyll a apoprotein A1 (750 aa).

Transmembrane regions (helical) follow at residues 70–93, 156–179, 195–219, 291–309, 346–369, 385–411, 433–455, and 531–549; these read VFSA…FHGA, LYCT…FHYH, LNHH…HVSL, IAHH…GHMY, WHAQ…HHMY, LSLF…IFMV, AIIS…LYIH, and FLVH…LILL. [4Fe-4S] cluster contacts are provided by Cys573 and Cys582. 2 helical membrane passes run 589–610 and 664–686; these read HVFL…HFSW and LSAY…MFLF. Chlorophyll a' is bound at residue His675. Positions 683 and 691 each coordinate chlorophyll a. Trp692 provides a ligand contact to phylloquinone. A helical membrane pass occupies residues 724 to 744; sequence AVGVTHYLLGGIATTWAFFLA.

It belongs to the PsaA/PsaB family. As to quaternary structure, the PsaA/B heterodimer binds the P700 chlorophyll special pair and subsequent electron acceptors. PSI consists of a core antenna complex that captures photons, and an electron transfer chain that converts photonic excitation into a charge separation. The eukaryotic PSI reaction center is composed of at least 11 subunits. P700 is a chlorophyll a/chlorophyll a' dimer, A0 is one or more chlorophyll a, A1 is one or both phylloquinones and FX is a shared 4Fe-4S iron-sulfur center. is required as a cofactor.

The protein localises to the plastid. Its subcellular location is the chloroplast thylakoid membrane. The enzyme catalyses reduced [plastocyanin] + hnu + oxidized [2Fe-2S]-[ferredoxin] = oxidized [plastocyanin] + reduced [2Fe-2S]-[ferredoxin]. Functionally, psaA and PsaB bind P700, the primary electron donor of photosystem I (PSI), as well as the electron acceptors A0, A1 and FX. PSI is a plastocyanin-ferredoxin oxidoreductase, converting photonic excitation into a charge separation, which transfers an electron from the donor P700 chlorophyll pair to the spectroscopically characterized acceptors A0, A1, FX, FA and FB in turn. Oxidized P700 is reduced on the lumenal side of the thylakoid membrane by plastocyanin. The polypeptide is Photosystem I P700 chlorophyll a apoprotein A1 (Lobularia maritima (Sweet alyssum)).